The sequence spans 536 residues: Phosphoenolpyruvate carboxykinase (ATP) (536 aa).

Residues arginine 61, tyrosine 195, and lysine 201 each contribute to the substrate site. ATP contacts are provided by residues lysine 201, histidine 220, and 236-244 (GLSGTGKTT). Positions 201 and 220 each coordinate Mn(2+). Aspartate 257 is a binding site for Mn(2+). 3 residues coordinate ATP: glutamate 285, arginine 322, and threonine 447. Arginine 322 contributes to the substrate binding site.

This sequence belongs to the phosphoenolpyruvate carboxykinase (ATP) family. Mn(2+) serves as cofactor.

The protein resides in the cytoplasm. It carries out the reaction oxaloacetate + ATP = phosphoenolpyruvate + ADP + CO2. It participates in carbohydrate biosynthesis; gluconeogenesis. Involved in the gluconeogenesis. Catalyzes the conversion of oxaloacetate (OAA) to phosphoenolpyruvate (PEP) through direct phosphoryl transfer between the nucleoside triphosphate and OAA. The polypeptide is Phosphoenolpyruvate carboxykinase (ATP) (Chelativorans sp. (strain BNC1)).